The following is a 417-amino-acid chain: NADH-quinone oxidoreductase subunit D (417 aa).

It belongs to the complex I 49 kDa subunit family. In terms of assembly, NDH-1 is composed of 14 different subunits. Subunits NuoB, C, D, E, F, and G constitute the peripheral sector of the complex.

The protein resides in the cell inner membrane. It catalyses the reaction a quinone + NADH + 5 H(+)(in) = a quinol + NAD(+) + 4 H(+)(out). Its function is as follows. NDH-1 shuttles electrons from NADH, via FMN and iron-sulfur (Fe-S) centers, to quinones in the respiratory chain. The immediate electron acceptor for the enzyme in this species is believed to be ubiquinone. Couples the redox reaction to proton translocation (for every two electrons transferred, four hydrogen ions are translocated across the cytoplasmic membrane), and thus conserves the redox energy in a proton gradient. The chain is NADH-quinone oxidoreductase subunit D from Paracidovorax citrulli (strain AAC00-1) (Acidovorax citrulli).